The chain runs to 320 residues: Formimidoylglutamase (320 aa).

The Mn(2+) site is built by His-125, Asp-153, His-155, Asp-157, Asp-244, and Asp-246.

This sequence belongs to the arginase family. Mn(2+) is required as a cofactor.

It catalyses the reaction N-formimidoyl-L-glutamate + H2O = formamide + L-glutamate. The protein operates within amino-acid degradation; L-histidine degradation into L-glutamate; L-glutamate from N-formimidoyl-L-glutamate (hydrolase route): step 1/1. In terms of biological role, catalyzes the conversion of N-formimidoyl-L-glutamate to L-glutamate and formamide. In Rhodococcus jostii (strain RHA1), this protein is Formimidoylglutamase.